Here is a 661-residue protein sequence, read N- to C-terminus: Bifunctional xylanase/xylan deacetylase (661 aa).

An N-terminal signal peptide occupies residues 1-27; sequence MKLPTLGKCVVRTLMGAVALGAISVNA. The 198-residue stretch at 29–226 folds into the GH11 domain; it reads TLSSNSTGTN…SRGSSDITVS (198 aa). The Nucleophile; for endoxylanase activity role is filled by glutamate 116. Catalysis depends on glutamate 213, which acts as the Proton donor; for endoxylanase activity. The interval 220–259 is disordered; that stretch reads SSDITVSEGTSGGGTSSVGGASSSVNSSTGGGSSGGITVR. A compositionally biased stretch (low complexity) spans 237–247; that stretch reads VGGASSSVNSS. Residues 394-577 form a polysaccharide deacetylase region; that stretch reads SNCSGYVGIT…AKGLCPGRID (184 aa). The region spanning 398–574 is the NodB homology domain; the sequence is GYVGITFDDG…NLRAKGLCPG (177 aa). The tract at residues 578–610 is disordered; sequence PNTGRAVAPSSSGGSSSVALSSSSRSSSSAGGN. The segment covering 581–608 has biased composition (low complexity); that stretch reads GRAVAPSSSGGSSSVALSSSSRSSSSAG. In terms of domain architecture, CBM10 spans 616–645; that stretch reads QCNWWGTFYPLCQTQTSGWGWENSRSCIST.

In the N-terminal section; belongs to the glycosyl hydrolase 11 (cellulase G) family.

The protein resides in the secreted. It carries out the reaction Endohydrolysis of (1-&gt;4)-beta-D-xylosidic linkages in xylans.. It catalyses the reaction Deacetylation of xylans and xylo-oligosaccharides.. Its pathway is glycan degradation; xylan degradation. Its function is as follows. Endo-acting xylanase which specifically cleaves internal linkages on the xylan backbone, releasing xylooligosaccharides. Is able to hydrolyze oat spelt xylan and the arabinoxylans from wheat and rye, releasing xylobiose as the major product. Also likely catalyzes, via its C-terminal domain, the removal of acetyl groups from acetylated xylan. Thus, has the capability of hydrolyzing acetylated xylan. Does not attack mannan, galactan, arabinan or any cellulosic substrates. The protein is Bifunctional xylanase/xylan deacetylase (xyn11A) of Cellvibrio japonicus (Pseudomonas fluorescens subsp. cellulosa).